Reading from the N-terminus, the 771-residue chain is Myotubularin-related protein 10 (771 aa).

One can recognise a Myotubularin phosphatase domain in the interval 217 to 657 (FETYSDWDRE…THIKLWKLCY (441 aa)). Residues serine 603 and serine 745 each carry the phosphoserine modification.

The protein belongs to the protein-tyrosine phosphatase family. Non-receptor class myotubularin subfamily.

The polypeptide is Myotubularin-related protein 10 (Mtmr10) (Mus musculus (Mouse)).